We begin with the raw amino-acid sequence, 379 residues long: Orotidine 5'-phosphate decarboxylase (379 aa).

Residues D42, 64 to 66 (KTH), and 99 to 108 (DRKFGDIGHT) contribute to the substrate site. K101 acts as the Proton donor in catalysis. Positions 165 to 198 (PTMDQFDDAEDAKDDEPATVNDNGSNMMEKPIYA) are disordered. The segment covering 169-178 (QFDDAEDAKD) has biased composition (acidic residues). Substrate is bound by residues Y331 and R350.

This sequence belongs to the OMP decarboxylase family.

It carries out the reaction orotidine 5'-phosphate + H(+) = UMP + CO2. It participates in pyrimidine metabolism; UMP biosynthesis via de novo pathway; UMP from orotate: step 2/2. In Hypocrea atroviridis (Trichoderma atroviride), this protein is Orotidine 5'-phosphate decarboxylase (pyr4).